The sequence spans 549 residues: MTLASIRRGYHVIKTLLQYGLDDVLPPKMTPWYFKLARNSLFWIRNKHKGKSGGERLKLAMQELGPVYIKLGQMLSTRRDLLSDEWANELAMLQDKVPPFDGALARQAIEAELKAPIESYFDDFDETPLASASISQVHTATLKSNGKAVVLKVLRPNVETKIQADLLLMSQTAKVIDYLLGEGNRLRPSEVIEDYRVTILGELNLKLEALNAIKLRNNFLDSDALYIPYVYEEFCYPRLMVMERIYGIPVSDIAALKAQGTNFKLLAERGVELFFTQVFRDNFFHADMHPGNIFISREHPENPYYIGLDCGIMGTLSEVDKRYLAENFLAFFNRDYHRIAQLYIESGWVSEKTDLQAFEQAIKVVCEPMFNKPLDEISFGHVLLELFRTARHFDIVVQPQLVLLEKTLLYIEGLGRQLYPQLDLWQTAKPFLEQWMAEQVGPKAMFKKVSTKLPYWSDKLPEFPELIYDNLKLGRKLLSSQQQMLDKYLKYQQQAHKSNYLLITSAILLICGTLLFNQDATLWSPYVCLISGAVLWIIGWRSRPKNRKF.

A Protein kinase domain is found at 123-501 (DFDETPLASA…QQQAHKSNYL (379 aa)). ATP-binding positions include 129 to 137 (LASASISQV) and Lys152. The Proton acceptor role is filled by Asp287. A run of 2 helical transmembrane segments spans residues 498–518 (SNYLLITSAILLICGTLLFNQ) and 520–540 (ATLWSPYVCLISGAVLWIIGW).

The protein belongs to the ABC1 family. UbiB subfamily.

It is found in the cell inner membrane. The protein operates within cofactor biosynthesis; ubiquinone biosynthesis [regulation]. Its function is as follows. Is probably a protein kinase regulator of UbiI activity which is involved in aerobic coenzyme Q (ubiquinone) biosynthesis. The sequence is that of Probable protein kinase UbiB from Shewanella sp. (strain ANA-3).